The chain runs to 505 residues: Probable ribonuclease FAU-1 (505 aa).

A disordered region spans residues 389–408 (ISGHGSGTYDELGTPRESGD).

This sequence belongs to the FAU-1 family.

Its function is as follows. Probable RNase involved in rRNA stability through maturation and/or degradation of precursor rRNAs. Binds to RNA in loop regions with AU-rich sequences. The protein is Probable ribonuclease FAU-1 of Haloquadratum walsbyi (strain DSM 16790 / HBSQ001).